The chain runs to 74 residues: Acyl carrier protein (74 aa).

Residues 1–73 (MAVFEKVQEI…DLVAYVEEKS (73 aa)) form the Carrier domain. Ser35 bears the O-(pantetheine 4'-phosphoryl)serine mark.

Belongs to the acyl carrier protein (ACP) family. Post-translationally, 4'-phosphopantetheine is transferred from CoA to a specific serine of apo-ACP by AcpS. This modification is essential for activity because fatty acids are bound in thioester linkage to the sulfhydryl of the prosthetic group.

Its subcellular location is the cytoplasm. The protein operates within lipid metabolism; fatty acid biosynthesis. Functionally, carrier of the growing fatty acid chain in fatty acid biosynthesis. In Streptococcus pyogenes serotype M1, this protein is Acyl carrier protein.